The primary structure comprises 82 residues: Splicing factor U2AF 35 kDa subunit (82 aa).

An N-acetylalanine modification is found at Ala2. The segment at 12-40 (EKDKVNCSFYFKIGACRHGDRCSRLHNKP) adopts a C3H1-type zinc-finger fold. N6-methyllysine is present on Lys39. Residues 65-82 (SHCHVSDVEVQEHYDNFF) enclose the RRM domain.

Belongs to the splicing factor SR family. Identified in the spliceosome C complex. Heterodimer with U2AF2. Interacts (via RS domain) with PHF5A (via N-terminus). Interacts with ZRANB2. Interacts with SDE2. Interacts with SF3B1.

It localises to the nucleus. The protein resides in the nucleus speckle. Plays a critical role in both constitutive and enhancer-dependent splicing by mediating protein-protein interactions and protein-RNA interactions required for accurate 3'-splice site selection. Recruits U2 snRNP to the branch point. Directly mediates interactions between U2AF2 and proteins bound to the enhancers and thus may function as a bridge between U2AF2 and the enhancer complex to recruit it to the adjacent intron. The polypeptide is Splicing factor U2AF 35 kDa subunit (U2AF1) (Sus scrofa (Pig)).